We begin with the raw amino-acid sequence, 623 residues long: ATPase expression protein 3 (623 aa).

PPR repeat units lie at residues 217–251, 252–292, 362–396, 405–439, and 445–479; these read SVQCYNDILYFYSKKYDFATCRELFAQMKVEGCKP, NTTT…NGIF, NLKFVNLLISDLVLDHNVERAWSVLRYFELKQLKF, NSETMNTFLRYFAEQGRIDLCFLTYNYFVKDLVGP, and NVNTFDMLMKSLVKNGYTETLPTVFEVICALSERY.

It is found in the mitochondrion inner membrane. Functionally, required for respiration. In Candida glabrata (strain ATCC 2001 / BCRC 20586 / JCM 3761 / NBRC 0622 / NRRL Y-65 / CBS 138) (Yeast), this protein is ATPase expression protein 3 (AEP3).